The chain runs to 193 residues: Orotate phosphoribosyltransferase (193 aa).

117–125 (EDVVTTGLS) provides a ligand contact to 5-phospho-alpha-D-ribose 1-diphosphate. The orotate site is built by Thr-121 and Arg-149.

Belongs to the purine/pyrimidine phosphoribosyltransferase family. PyrE subfamily. Homodimer. Requires Mg(2+) as cofactor.

The enzyme catalyses orotidine 5'-phosphate + diphosphate = orotate + 5-phospho-alpha-D-ribose 1-diphosphate. The protein operates within pyrimidine metabolism; UMP biosynthesis via de novo pathway; UMP from orotate: step 1/2. Catalyzes the transfer of a ribosyl phosphate group from 5-phosphoribose 1-diphosphate to orotate, leading to the formation of orotidine monophosphate (OMP). This is Orotate phosphoribosyltransferase from Erythrobacter litoralis (strain HTCC2594).